Here is a 159-residue protein sequence, read N- to C-terminus: Transcription elongation factor GreA (159 aa).

Positions Ser47 to Glu77 form a coiled coil.

It belongs to the GreA/GreB family.

In terms of biological role, necessary for efficient RNA polymerase transcription elongation past template-encoded arresting sites. The arresting sites in DNA have the property of trapping a certain fraction of elongating RNA polymerases that pass through, resulting in locked ternary complexes. Cleavage of the nascent transcript by cleavage factors such as GreA or GreB allows the resumption of elongation from the new 3'terminus. GreA releases sequences of 2 to 3 nucleotides. The chain is Transcription elongation factor GreA from Metamycoplasma arthritidis (strain 158L3-1) (Mycoplasma arthritidis).